The sequence spans 505 residues: MKNEKRKSGIEPKVFFPPLIIVGILCWLTVRDLDAANIVINAVFSYVTNIWGWAFEWYMVVMLFGWFWLVFGPYAKKRLGDEPPEFSTASWIFMMFASCTSAAVLFWGSIEIYYYISTPPFALAPGSNGAKEIGLAYSLFHWGPLPWATYSFLSVAFAYFFFVRKMDVIRPSSTLVPLVGEKHAKGLFGTIVDNFYLVALIFAMGTSLGLATPLVTECMQYLFGIPHTLELDAIIITCWIVLNAICVACGLQKGVKIASDVRSYLSFLMLGWVFIVSGASFIMNYFTDSVGMLLMYLPRMLFYTDAIGKGGFPQGWTVFYWAWWVIYAIQMSIFLARISRGRTVRELCFGMVLGLTASTWILWTVLGSNTLLLMDKNILNIPQLIEQHGVARAIIETWAALPFSTATMWGFFILCFIATVTLINACSYTLAMSTCREVRDGEEPPLLVRIGWSVLVGVIGIVLLALGGLKPIQTAIIAGGCPLFFVNIMVTLSFIKDAKVHWKDK.

Helical transmembrane passes span 10–30, 50–70, 92–112, 143–163, 195–215, 231–251, 263–283, 316–336, 347–367, 403–423, 446–466, and 475–495; these read IEPK…WLTV, IWGW…FWLV, IFMM…SIEI, GPLP…FFFV, FYLV…TPLV, LDAI…ACGL, SYLS…SFIM, WTVF…IFLA, LCFG…TVLG, FSTA…VTLI, LLVR…LLAL, and AIIA…LSFI.

This sequence belongs to the BCCT transporter (TC 2.A.15) family. CaiT subfamily. In terms of assembly, homotrimer.

The protein localises to the cell inner membrane. The catalysed reaction is 4-(trimethylamino)butanoate(in) + (R)-carnitine(out) = 4-(trimethylamino)butanoate(out) + (R)-carnitine(in). It functions in the pathway amine and polyamine metabolism; carnitine metabolism. Catalyzes the exchange of L-carnitine for gamma-butyrobetaine. This is L-carnitine/gamma-butyrobetaine antiporter from Citrobacter koseri (strain ATCC BAA-895 / CDC 4225-83 / SGSC4696).